The sequence spans 835 residues: BCL11 transcription factor A (835 aa).

Basic residues predominate over residues 1–12; that stretch reads MSRRKQGKPQHL. A disordered region spans residues 1–41; the sequence is MSRRKQGKPQHLSKREFSPEPLEAILTDDEPDHGPLGAPEG. A required for nuclear body formation and for SUMO1 recruitment region spans residues 1 to 210; that stretch reads MSRRKQGKPQ…SEHGSPLTPR (210 aa). A C2HC-type zinc finger spans residues 45–71; that stretch reads LLTCGQCQMNFPLGDILIFIEHKRKQC. Zn(2+) contacts are provided by cysteine 48, cysteine 51, histidine 66, and cysteine 71. Position 86 is a phosphoserine (serine 86). A Glycyl lysine isopeptide (Lys-Gly) (interchain with G-Cter in SUMO2) cross-link involves residue lysine 123. The residue at position 162 (isoleucine 162) is a Phosphothreonine. Lysine 164 participates in a covalent cross-link: Glycyl lysine isopeptide (Lys-Gly) (interchain with G-Cter in SUMO2). Residues 170–193 form a C2H2-type 1 zinc finger; that stretch reads YTCTTCKQPFTSAWFLLQHAQNTH. Serine 205 carries the phosphoserine modification. Residue proline 214 is modified to Phosphothreonine. Arginine 271 is modified (asymmetric dimethylarginine). Residues 323–376 form a disordered region; it reads AGNTSSPPLSPGRPSPMQRLLQPFQPGSKPPFLATPPLPPLQSAPPPSQPPVKS. Serine 332 and serine 337 each carry phosphoserine. A compositionally biased stretch (pro residues) spans 355–372; it reads LATPPLPPLQSAPPPSQP. 2 consecutive C2H2-type zinc fingers follow at residues 377 to 399 and 405 to 429; these read KSCE…RRSH and YKCN…THMH. The segment covering 421-430 has biased composition (basic residues); sequence KRHMKTHMHK. Disordered regions lie at residues 421 to 458, 471 to 512, and 572 to 619; these read KRHM…LVGS, KSEN…ERVD, and RSHL…GLSK. The segment covering 441–450 has biased composition (polar residues); it reads GLSTASSPEP. Residues serine 446 and serine 447 each carry the phosphoserine modification. Residues 482 to 506 show a composition bias toward acidic residues; it reads NGDEEEEEDDEEEEEEEEEEEEELT. Residues 574-584 are compositionally biased toward basic and acidic residues; it reads HLAEAEGHRDT. A Phosphoserine modification is found at serine 608. Lysine 620 participates in a covalent cross-link: Glycyl lysine isopeptide (Lys-Gly) (interchain with G-Cter in SUMO2). A phosphoserine mark is found at serine 625 and serine 630. Lysine 634 participates in a covalent cross-link: Glycyl lysine isopeptide (Lys-Gly) (interchain with G-Cter in SUMO1). Over residues 682-696 the composition is skewed to low complexity; it reads SPFASSSEHSSENGS. Residue threonine 701 is modified to Phosphothreonine. Residues 706 to 720 show a composition bias toward gly residues; sequence LDGGISGRSGTGSGG. The segment at 737-835 is DNA-binding; the sequence is EGRRSDTCEY…RVLNNDIKTE (99 aa). A C2H2-type 4 zinc finger spans residues 742–764; it reads DTCEYCGKVFKNCSNLTVHRRSH. Zn(2+) contacts are provided by cysteine 744, cysteine 747, histidine 760, and histidine 764. Residues 764–773 are compositionally biased toward polar residues; sequence HTGERPYKCE. Residues 765–769 form a disordered region; sequence TGERP. A C2H2-type 5 zinc finger spans residues 770–792; the sequence is YKCELCNYACAQSSKLTRHMKTH. Zn(2+) contacts are provided by cysteine 772, cysteine 775, histidine 788, and histidine 792. The segment at 793–799 is disordered; that stretch reads GQVGKDV. The C2H2-type 6 zinc-finger motif lies at 800–823; sequence YKCEICKMPFSVYSTLEKHMKKWH. Positions 802, 805, 818, and 823 each coordinate Zn(2+).

As to quaternary structure, homotetrameric; self-associates via C2HC-type zinc finger domain. Interacts with MTA2, a component of the nucleosome remodeling and deacetylase (NuRD) repressor complex. Interacts with NR2F1, PIAS3, NR2F2 and NR2F6. Interacts with TBR1. Sumoylated with SUMO1. As to expression, isoforms are expressed in a tissue-specific fashion. Isoforms 1, isoform 2, and isoform 3 are expressed at similar levels in testis, kidney and spleen. Isoform 1 is expressed in the stomach, and isoform 2 is expressed exclusively in the lung. Overexpression following proviral integration in hematopoietic cells results in the generation of myeloid leukemia.

The protein localises to the cytoplasm. The protein resides in the nucleus. Transcription factor. Associated with the BAF SWI/SNF chromatin remodeling complex. Binds to the 5'-TGACCA-3' sequence motif in regulatory regions of target genes. Involved in brain development. May play a role in hematopoiesis. Essential factor in lymphopoiesis, required for B-cell formation in fetal liver. May function as a modulator of the transcriptional repression activity of NR2F2. The sequence is that of BCL11 transcription factor A (Bcl11a) from Mus musculus (Mouse).